We begin with the raw amino-acid sequence, 152 residues long: Small ribosomal subunit protein uS15 (152 aa).

The span at 1–19 (MAKMHTRRKGRSRSTRPVR) shows a compositional bias: basic residues. Residues 1-21 (MAKMHTRRKGRSRSTRPVRKT) form a disordered region.

This sequence belongs to the universal ribosomal protein uS15 family. Part of the 30S ribosomal subunit.

The polypeptide is Small ribosomal subunit protein uS15 (Methanocella arvoryzae (strain DSM 22066 / NBRC 105507 / MRE50)).